We begin with the raw amino-acid sequence, 286 residues long: Aminoglycoside N(3)-acetyltransferase III (286 aa).

This sequence belongs to the antibiotic N-acetyltransferase family.

It carries out the reaction a 2-deoxystreptamine antibiotic + acetyl-CoA = an N(3)-acetyl-2-deoxystreptamine antibiotic + CoA + H(+). Resistance to antibiotics containing the 2-deoxy-streptamine ring including gentamicin, kanamycin, tobramycin, neomycin and apramycin. The chain is Aminoglycoside N(3)-acetyltransferase III (aacC3) from Salmonella sp.